Here is a 40-residue protein sequence, read N- to C-terminus: Large ribosomal subunit protein bL36B (40 aa).

Belongs to the bacterial ribosomal protein bL36 family.

The chain is Large ribosomal subunit protein bL36B from Arthrobacter sp. (strain FB24).